Here is a 568-residue protein sequence, read N- to C-terminus: Proline--tRNA ligase (568 aa).

The protein belongs to the class-II aminoacyl-tRNA synthetase family. ProS type 1 subfamily. Homodimer.

It localises to the cytoplasm. It carries out the reaction tRNA(Pro) + L-proline + ATP = L-prolyl-tRNA(Pro) + AMP + diphosphate. Its function is as follows. Catalyzes the attachment of proline to tRNA(Pro) in a two-step reaction: proline is first activated by ATP to form Pro-AMP and then transferred to the acceptor end of tRNA(Pro). As ProRS can inadvertently accommodate and process non-cognate amino acids such as alanine and cysteine, to avoid such errors it has two additional distinct editing activities against alanine. One activity is designated as 'pretransfer' editing and involves the tRNA(Pro)-independent hydrolysis of activated Ala-AMP. The other activity is designated 'posttransfer' editing and involves deacylation of mischarged Ala-tRNA(Pro). The misacylated Cys-tRNA(Pro) is not edited by ProRS. This chain is Proline--tRNA ligase, found in Nitrosomonas eutropha (strain DSM 101675 / C91 / Nm57).